A 469-amino-acid polypeptide reads, in one-letter code: MQVTETLNEGLKREIKIVVPAKALEEKLNEWLDDTKDKIKLNGFRPGKVPAEYLRKMYGKSFMAEILNEIISDAPRSILADRNERPAMQPQIDIDEDEKILDGRADFVFSLKYEVLPKFEIKDFDHIEIIREIAAVPEKEIDEQVERVLSSTRSYSLKEGLSEEGDCVTIDYLGKLEGVPFEGGADSDAQLILGSKQFIPGFEEQLVDVKAGDTKTISVKFPDNYSAVHLAGRDAEFDITVKAISKPDELKIDDEAAKKVGLESLERLREVVRGQIESQYGSIIRQKIKRQILDALDADYNFEIPEGLLEIEFNNIWAQVNDDLKKAGRSFEDEGVTEKHAREEYRVLAQRRVRLGLVLSEIGMKADVKISEDELKAAVFDQVRQYPGQEKEIMNFFRNTPEAVANLRAPIFEEKVIDHLLSRIKITDKEVTVEELMKEYDESDLTEKKPEKKKGVEKTPIRKKAPKKG.

One can recognise a PPIase FKBP-type domain in the interval 165–250 (GDCVTIDYLG…VKAISKPDEL (86 aa)). The span at 439–460 (EYDESDLTEKKPEKKKGVEKTP) shows a compositional bias: basic and acidic residues. The segment at 439 to 469 (EYDESDLTEKKPEKKKGVEKTPIRKKAPKKG) is disordered.

This sequence belongs to the FKBP-type PPIase family. Tig subfamily.

The protein resides in the cytoplasm. It catalyses the reaction [protein]-peptidylproline (omega=180) = [protein]-peptidylproline (omega=0). In terms of biological role, involved in protein export. Acts as a chaperone by maintaining the newly synthesized protein in an open conformation. Functions as a peptidyl-prolyl cis-trans isomerase. This chain is Trigger factor, found in Bartonella quintana (strain Toulouse) (Rochalimaea quintana).